Reading from the N-terminus, the 236-residue chain is tRNA (guanine-N(1)-)-methyltransferase (236 aa).

S-adenosyl-L-methionine-binding positions include G112 and 132 to 137; that span reads VGDFIL.

It belongs to the RNA methyltransferase TrmD family. As to quaternary structure, homodimer.

The protein localises to the cytoplasm. It catalyses the reaction guanosine(37) in tRNA + S-adenosyl-L-methionine = N(1)-methylguanosine(37) in tRNA + S-adenosyl-L-homocysteine + H(+). Functionally, specifically methylates guanosine-37 in various tRNAs. In Campylobacter curvus (strain 525.92), this protein is tRNA (guanine-N(1)-)-methyltransferase.